A 585-amino-acid polypeptide reads, in one-letter code: Isocitrate dehydrogenase kinase/phosphatase (585 aa).

ATP-binding positions include Ala-315–Met-321 and Lys-336. Asp-371 is an active-site residue.

The protein belongs to the AceK family.

It localises to the cytoplasm. It carries out the reaction L-seryl-[isocitrate dehydrogenase] + ATP = O-phospho-L-seryl-[isocitrate dehydrogenase] + ADP + H(+). Its function is as follows. Bifunctional enzyme which can phosphorylate or dephosphorylate isocitrate dehydrogenase (IDH) on a specific serine residue. This is a regulatory mechanism which enables bacteria to bypass the Krebs cycle via the glyoxylate shunt in response to the source of carbon. When bacteria are grown on glucose, IDH is fully active and unphosphorylated, but when grown on acetate or ethanol, the activity of IDH declines drastically concomitant with its phosphorylation. The protein is Isocitrate dehydrogenase kinase/phosphatase of Photorhabdus laumondii subsp. laumondii (strain DSM 15139 / CIP 105565 / TT01) (Photorhabdus luminescens subsp. laumondii).